A 364-amino-acid polypeptide reads, in one-letter code: Histidinol-phosphate aminotransferase 1 (364 aa).

An N6-(pyridoxal phosphate)lysine modification is found at Lys-211.

It belongs to the class-II pyridoxal-phosphate-dependent aminotransferase family. Histidinol-phosphate aminotransferase subfamily. Homodimer. Requires pyridoxal 5'-phosphate as cofactor.

It carries out the reaction L-histidinol phosphate + 2-oxoglutarate = 3-(imidazol-4-yl)-2-oxopropyl phosphate + L-glutamate. It functions in the pathway amino-acid biosynthesis; L-histidine biosynthesis; L-histidine from 5-phospho-alpha-D-ribose 1-diphosphate: step 7/9. The polypeptide is Histidinol-phosphate aminotransferase 1 (Legionella pneumophila (strain Lens)).